The following is a 63-amino-acid chain: Large ribosomal subunit protein uL29 (63 aa).

It belongs to the universal ribosomal protein uL29 family.

The sequence is that of Large ribosomal subunit protein uL29 from Salmonella agona (strain SL483).